Consider the following 293-residue polypeptide: ATP synthase subunit a (293 aa).

The next 8 membrane-spanning stretches (helical) occupy residues 39–59 (QVFG…VYWI), 73–93 (FVLL…DLIG), 102–122 (YFLM…LGGI), 128–148 (SLTF…IMGI), 172–192 (TLIP…SISL), 198–218 (ILGG…AFST), 224–244 (LALS…HVYF), and 245–265 (DVVV…NYWA).

Belongs to the ATPase A chain family. In terms of assembly, F-type ATPases have 2 components, CF(1) - the catalytic core - and CF(0) - the membrane proton channel. CF(1) has five subunits: alpha(3), beta(3), gamma(1), delta(1), epsilon(1). CF(0) has three main subunits: a(1), b(2) and c(9-12). The alpha and beta chains form an alternating ring which encloses part of the gamma chain. CF(1) is attached to CF(0) by a central stalk formed by the gamma and epsilon chains, while a peripheral stalk is formed by the delta and b chains.

It is found in the cell membrane. Functionally, key component of the proton channel; it plays a direct role in the translocation of protons across the membrane. This is ATP synthase subunit a from Mycoplasma pneumoniae (strain ATCC 29342 / M129 / Subtype 1) (Mycoplasmoides pneumoniae).